Reading from the N-terminus, the 363-residue chain is Probable butyrate kinase (363 aa).

This sequence belongs to the acetokinase family.

It localises to the cytoplasm. The catalysed reaction is butanoate + ATP = butanoyl phosphate + ADP. This is Probable butyrate kinase from Maridesulfovibrio salexigens (strain ATCC 14822 / DSM 2638 / NCIMB 8403 / VKM B-1763) (Desulfovibrio salexigens).